A 193-amino-acid chain; its full sequence is Thioredoxin peroxidase (193 aa).

The Thioredoxin domain occupies 3-161 (AVVGKLAPSF…ALRLLDAFQF (159 aa)). Cys48 acts as the Cysteine sulfenic acid (-SOH) intermediate in catalysis.

It belongs to the peroxiredoxin family. AhpC/Prx1 subfamily. Homodimer; disulfide-linked, upon oxidation.

The enzyme catalyses a hydroperoxide + [thioredoxin]-dithiol = an alcohol + [thioredoxin]-disulfide + H2O. Functionally, thiol-specific peroxidase that catalyzes the reduction of hydrogen peroxide and organic hydroperoxides to water and alcohols, respectively. Plays a role in cell protection against oxidative stress by detoxifying peroxides and as sensor of hydrogen peroxide-mediated signaling events. This Echinococcus granulosus (Hydatid tapeworm) protein is Thioredoxin peroxidase (TPX).